A 170-amino-acid polypeptide reads, in one-letter code: 4-hydroxyphenylacetate 3-monooxygenase reductase component (170 aa).

This sequence belongs to the non-flavoprotein flavin reductase family. HpaC subfamily. Homodimer. 4-HPA 3-monooxygenase consists of a reductase component HpaC and an oxygenase component HpaB.

The catalysed reaction is a reduced flavin + NAD(+) = an oxidized flavin + NADH + 2 H(+). It participates in aromatic compound metabolism; 4-hydroxyphenylacetate degradation; pyruvate and succinate semialdehyde from 4-hydroxyphenylacetate: step 1/7. Functionally, catalyzes the reduction of free flavins (FMN, FAD and riboflavin) by NADH. Subsequently, the reduced flavins diffuse to the large HpaB component or to other electron acceptors such as cytochrome c and Fe(3+) ion. The polypeptide is 4-hydroxyphenylacetate 3-monooxygenase reductase component (hpaC) (Salmonella typhimurium (strain LT2 / SGSC1412 / ATCC 700720)).